Reading from the N-terminus, the 431-residue chain is D-tagatose-1,6-bisphosphate aldolase subunit KbaZ (431 aa).

Belongs to the GatZ/KbaZ family. KbaZ subfamily. In terms of assembly, forms a complex with KbaY.

Its pathway is carbohydrate metabolism; D-tagatose 6-phosphate degradation; D-glyceraldehyde 3-phosphate and glycerone phosphate from D-tagatose 6-phosphate: step 2/2. Its function is as follows. Component of the tagatose-1,6-bisphosphate aldolase KbaYZ that is required for full activity and stability of the Y subunit. Could have a chaperone-like function for the proper and stable folding of KbaY. When expressed alone, KbaZ does not show any aldolase activity. This is D-tagatose-1,6-bisphosphate aldolase subunit KbaZ from Salmonella arizonae (strain ATCC BAA-731 / CDC346-86 / RSK2980).